A 350-amino-acid chain; its full sequence is uncharacterized protein (350 aa).

Its function is as follows. May play a role in septum formation. This is an uncharacterized protein from Mycobacterium tuberculosis (strain CDC 1551 / Oshkosh).